The following is a 363-amino-acid chain: NAD(P)H-quinone oxidoreductase subunit 1, chloroplastic (363 aa).

7 consecutive transmembrane segments (helical) span residues 28 to 48 (WVLA…LVIV), 98 to 118 (FSIG…VIPF), 129 to 149 (IGIF…LMSG), 253 to 273 (FGLF…FVTV), 274 to 294 (LYLG…LVEI), 300 to 320 (IFGT…FLFI), and 336 to 356 (LLNL…LLTT).

This sequence belongs to the complex I subunit 1 family. NDH is composed of at least 16 different subunits, 5 of which are encoded in the nucleus.

The protein resides in the plastid. It localises to the chloroplast thylakoid membrane. The enzyme catalyses a plastoquinone + NADH + (n+1) H(+)(in) = a plastoquinol + NAD(+) + n H(+)(out). It catalyses the reaction a plastoquinone + NADPH + (n+1) H(+)(in) = a plastoquinol + NADP(+) + n H(+)(out). NDH shuttles electrons from NAD(P)H:plastoquinone, via FMN and iron-sulfur (Fe-S) centers, to quinones in the photosynthetic chain and possibly in a chloroplast respiratory chain. The immediate electron acceptor for the enzyme in this species is believed to be plastoquinone. Couples the redox reaction to proton translocation, and thus conserves the redox energy in a proton gradient. In Citrus sinensis (Sweet orange), this protein is NAD(P)H-quinone oxidoreductase subunit 1, chloroplastic.